The sequence spans 473 residues: Photosystem II CP43 reaction center protein (473 aa).

The propeptide occupies 1–14; sequence MKTLYSLRRFYHVE. Thr15 carries the post-translational modification N-acetylthreonine. At Thr15 the chain carries Phosphothreonine. Transmembrane regions (helical) follow at residues 69-93, 134-155, 178-200, 255-275, and 291-312; these read LFEV…PHLA, LIGP…KDKN, KAVW…RKIT, KPFA…LSYS, and WFNN…ASQA. A [CaMn4O5] cluster-binding site is contributed by Glu367. Residues 447–471 form a helical membrane-spanning segment; sequence RARAAAAGFEKGIDRETEPVFFMNP.

It belongs to the PsbB/PsbC family. PsbC subfamily. PSII is composed of 1 copy each of membrane proteins PsbA, PsbB, PsbC, PsbD, PsbE, PsbF, PsbH, PsbI, PsbJ, PsbK, PsbL, PsbM, PsbT, PsbX, PsbY, PsbZ, Psb30/Ycf12, at least 3 peripheral proteins of the oxygen-evolving complex and a large number of cofactors. It forms dimeric complexes. Requires Binds multiple chlorophylls and provides some of the ligands for the Ca-4Mn-5O cluster of the oxygen-evolving complex. It may also provide a ligand for a Cl- that is required for oxygen evolution. PSII binds additional chlorophylls, carotenoids and specific lipids. as cofactor.

The protein localises to the plastid. The protein resides in the chloroplast thylakoid membrane. Functionally, one of the components of the core complex of photosystem II (PSII). It binds chlorophyll and helps catalyze the primary light-induced photochemical processes of PSII. PSII is a light-driven water:plastoquinone oxidoreductase, using light energy to abstract electrons from H(2)O, generating O(2) and a proton gradient subsequently used for ATP formation. The polypeptide is Photosystem II CP43 reaction center protein (Staurastrum punctulatum (Green alga)).